A 237-amino-acid chain; its full sequence is NAD-dependent protein deacylase (237 aa).

The region spanning 1–235 (MRVAVLSGAG…PGLLERLPAL (235 aa)) is the Deacetylase sirtuin-type domain. 8-28 (GAGISAESGVPTFRDDKNGLW) provides a ligand contact to NAD(+). Residues Y53 and R56 each coordinate substrate. Residue 86 to 89 (QNVD) coordinates NAD(+). The active-site Proton acceptor is the H104. Zn(2+) is bound by residues C112, C115, C138, and C140. NAD(+) is bound by residues 177–179 (GTS), 203–205 (NPE), and A221.

The protein belongs to the sirtuin family. Class III subfamily. It depends on Zn(2+) as a cofactor.

Its subcellular location is the cytoplasm. It catalyses the reaction N(6)-acetyl-L-lysyl-[protein] + NAD(+) + H2O = 2''-O-acetyl-ADP-D-ribose + nicotinamide + L-lysyl-[protein]. The enzyme catalyses N(6)-succinyl-L-lysyl-[protein] + NAD(+) + H2O = 2''-O-succinyl-ADP-D-ribose + nicotinamide + L-lysyl-[protein]. Its function is as follows. NAD-dependent lysine deacetylase and desuccinylase that specifically removes acetyl and succinyl groups on target proteins. Modulates the activities of several proteins which are inactive in their acylated form. The chain is NAD-dependent protein deacylase from Mycobacterium bovis (strain ATCC BAA-935 / AF2122/97).